Reading from the N-terminus, the 914-residue chain is Caprin-2 (914 aa).

Disordered regions lie at residues 259–283 (PLPKSDSQEKTETIKPDSQSRPSGL), 298–326 (EFLNRRYMPETDERRRGETASPRNWKEDF), 367–411 (KTVD…LPKD), 439–480 (DGES…SSQR), 495–529 (CLSNGDRSINGSDLELHSEDKPRKQAEGFNSPPLY), 608–631 (HRSFTSAKTSSVTTASTQTPPELN), and 718–747 (GAGTATQRSSAGWSDSSQVSSPDRDGAYPL). Positions 264-273 (DSQEKTETIK) are enriched in basic and acidic residues. The segment covering 274–283 (PDSQSRPSGL) has biased composition (polar residues). The segment covering 370-392 (DIVKRSTTDPKEKRQRKKAEQDS) has biased composition (basic and acidic residues). Residues 469–480 (KSPSDILPSSQR) are compositionally biased toward polar residues. Over residues 508–520 (LELHSEDKPRKQA) the composition is skewed to basic and acidic residues. The span at 610–626 (SFTSAKTSSVTTASTQT) shows a compositional bias: low complexity. A compositionally biased stretch (polar residues) spans 718–738 (GAGTATQRSSAGWSDSSQVSS). The region spanning 780–914 (LTQLRVAFSA…TFSGFLLYQD (135 aa)) is the C1q domain. Residues Asp-865 and Glu-871 each contribute to the Ca(2+) site.

Belongs to the caprin family. Homotrimer; via C1q domain.

The protein resides in the cytoplasm. Its subcellular location is the cell membrane. Its function is as follows. Promotes phosphorylation of the Wnt coreceptor LRP6, leading to increased activity of the canonical Wnt signaling pathway. Facilitates constitutive LRP6 phosphorylation by CDK14/CCNY during G2/M stage of the cell cycle, which may potentiate cells for Wnt signaling. May regulate the transport and translation of mRNAs, modulating for instance the expression of proteins involved in synaptic plasticity in neurons. Involved in regulation of growth as erythroblasts shift from a highly proliferative state towards their terminal phase of differentiation. May be involved in apoptosis. This is Caprin-2 from Danio rerio (Zebrafish).